Here is a 336-residue protein sequence, read N- to C-terminus: Potassium channel subfamily K member 1 (336 aa).

The Cytoplasmic segment spans residues 1–20 (MLQSLAGSSCVRLVERHRSA). The chain crosses the membrane as a helical span at residues 21–41 (WCFGFLVLGYLLYLVFGAVVF). The Extracellular portion of the chain corresponds to 42–103 (SSVELPYEDL…SNASGNWNWD (62 aa)). The N-linked (GlcNAc...) asparagine glycan is linked to Asn-95. Positions 104–116 (FTSALFFASTVLS) form an intramembrane region, helical. An intramembrane segment occupies 117–122 (TTGYGH). A selectivity filter 1 region spans residues 117–122 (TTGYGH). The Extracellular portion of the chain corresponds to 123 to 132 (TVPLSDGGKA). Residues 133–156 (FCIIYSVIGIPFTLLFLTAVVQRV) traverse the membrane as a helical segment. Residues 157–181 (TVHVTRRPVLYFHIRWGFSKQVVAI) are Cytoplasmic-facing. The chain crosses the membrane as a helical span at residues 182-202 (VHAVLLGFVTVSCFFFIPAAV). The Extracellular portion of the chain corresponds to 203–211 (FSVLEDDWN). The helical intramembrane region spans 212 to 224 (FLESFYFCFISLS). Residues 225 to 230 (TIGLGD) are selectivity filter 2. Residues 225–231 (TIGLGDY) lie within the membrane without spanning it. Residues 232–243 (VPGEGYNQKFRE) are Extracellular-facing. The chain crosses the membrane as a helical span at residues 244–267 (LYKIGITCYLLLGLIAMLVVLETF). Topologically, residues 268-336 (CELHELKKFR…PPYEDGSADH (69 aa)) are cytoplasmic. A Glycyl lysine isopeptide (Lys-Gly) (interchain with G-Cter in SUMO) cross-link involves residue Lys-274. Residues 293-299 (IMEHDQL) are important for intracellular retention in recycling endosomes. The tract at residues 310–336 (GLKEEQKQSEPFVASQSPPYEDGSADH) is disordered. Ser-326 is modified (phosphoserine).

The protein belongs to the two pore domain potassium channel (TC 1.A.1.8) family. Homodimer; disulfide-linked. Heterodimer with KCNK2; disulfide-linked. In astrocytes, forms mostly heterodimeric potassium channels with KCNK2, with only a minor proportion of functional channels containing homodimeric KCNK1. Interacts with KCNK3 and KCNK9, forming functional heterodimeric channels. Interacts with GNG4. Identified in a complex with PSD and ARF6; interacts only with PSD that is bound to ARF6. Interacts with UBE2I. In terms of processing, sumoylation is controversial. Sumoylated by UBE2I. Not sumoylated when expressed in xenopus oocytes or mammalian cells. Sumoylation inactivates the channel, but does not interfere with expression at the cell membrane. Sumoylation of a single subunit is sufficient to silence the dimeric channel. Sumoylation of KCNK1 is sufficient to silence heterodimeric channels formed by KCNK1 and KCNK3 or KCNK9. Desumoylated by SENP1; this activates the channel. Desumoylated by SENP1; this strongly increases halothane-mediated activation of heterodimeric channels formed with KCNK9. SENP1 treatment has no effect. As to expression, detected in spiral ganglion neurons. Detected in hippocampus CA1 and CA1 regions and in the molecular layer of the dentate gyrus. Detected on hippocampus astrocytes. Highly expressed in the stria vascularis in the cochlea. Detected in pancreas islet beta cells. Detected in kidney, at brush border membranes in proximal tubules and in cytoplasmic structures in distal convoluted tubules, thick ascending limbs and collecting ducts (at protein level). Widely expressed. Detected in spiral ganglion cells. Highest expression in brain, kidney, thyroid, salivary gland, adrenal gland, prostate, epididymis, uterus, placenta, colon and jejunum. Moderate expression in eyes, pituitary, pancreas, smooth muscle, testis and ovary. Very low levels in lung, aorta, liver, heart, skeletal muscle, thymus and spleen. In the brain, highest expression in cerebellar granule cells, brainstem, hippocampus and cerebral cortex.

The protein resides in the cell membrane. It is found in the recycling endosome. It localises to the apical cell membrane. Its subcellular location is the cytoplasmic vesicle. The protein localises to the perikaryon. The protein resides in the cell projection. It is found in the dendrite. It localises to the synaptic cell membrane. It carries out the reaction K(+)(in) = K(+)(out). The catalysed reaction is NH4(+)(in) = NH4(+)(out). It catalyses the reaction Na(+)(in) = Na(+)(out). The enzyme catalyses Rb(+)(in) = Rb(+)(out). It carries out the reaction Cs(+)(in) = Cs(+)(out). The catalysed reaction is Li(+)(in) = Li(+)(out). It catalyses the reaction L-glutamate(out) = L-glutamate(in). The enzyme catalyses chloride(in) = chloride(out). Its activity is regulated as follows. Inhibited by quinine, quinidine, barium, and internal acidification. Ion channel that contributes to passive transmembrane potassium transport and to the regulation of the resting membrane potential in brain astrocytes, but also in kidney and in other tissues. Forms dimeric channels through which potassium ions pass in accordance with their electrochemical gradient. The channel is selective for K(+) ions at physiological potassium concentrations and at neutral pH, but becomes permeable to Na(+) at subphysiological K(+) levels and upon acidification of the extracellular medium. The homodimer has very low potassium channel activity, when expressed in heterologous systems, and can function as weakly inward rectifying potassium channel. Channel activity is modulated by activation of serotonin receptors. Heterodimeric channels containing KCNK1 and KCNK2 have much higher activity, and may represent the predominant form in astrocytes. Heterodimeric channels containing KCNK1 and KCNK3 or KCNK9 have much higher activity. Heterodimeric channels formed by KCNK1 and KCNK9 may contribute to halothane-sensitive currents. Mediates outward rectifying potassium currents in dentate gyrus granule cells and contributes to the regulation of their resting membrane potential. Contributes to the regulation of action potential firing in dentate gyrus granule cells and down-regulates their intrinsic excitability. In astrocytes, the heterodimer formed by KCNK1 and KCNK2 is required for rapid glutamate release in response to activation of G-protein coupled receptors, such as F2R and CNR1. Required for normal ion and water transport in the kidney. Contributes to the regulation of the resting membrane potential of pancreatic beta cells. The low channel activity of homodimeric KCNK1 may be due to sumoylation. The low channel activity may be due to rapid internalization from the cell membrane and retention in recycling endosomes. Permeable to monovalent cations with ion selectivity for K(+) &gt; Rb(+) &gt;&gt; NH4(+) &gt;&gt; Cs(+) = Na(+) = Li(+). This chain is Potassium channel subfamily K member 1 (Kcnk1), found in Mus musculus (Mouse).